A 422-amino-acid polypeptide reads, in one-letter code: Beta-1,3-galactosyltransferase 2 (422 aa).

At 1-20 (MLQWRRRHCCFAKMTWSPKR) the chain is on the cytoplasmic side. Residues 21–43 (SLLRTPLTGVLSLVFLFAMFLFF) form a helical; Signal-anchor for type II membrane protein membrane-spanning segment. The Lumenal portion of the chain corresponds to 44–422 (NHHDWLPGRP…AGRYRHRKLH (379 aa)). N-linked (GlcNAc...) asparagine glycosylation is found at Asn-75, Asn-98, Asn-119, Asn-176, and Asn-226. Positions 91-110 (LRPHTASNSSNTELSPQGVT) are disordered. The segment covering 95 to 110 (TASNSSNTELSPQGVT) has biased composition (polar residues).

Belongs to the glycosyltransferase 31 family. Mn(2+) is required as a cofactor. As to expression, detected in brain and heart.

Its subcellular location is the golgi apparatus membrane. It carries out the reaction an N-acetyl-beta-D-glucosaminyl derivative + UDP-alpha-D-galactose = a beta-D-galactosyl-(1-&gt;3)-N-acetyl-beta-D-glucosaminyl derivative + UDP + H(+). The enzyme catalyses a beta-D-GlcNAc-(1-&gt;3)-beta-D-Gal-(1-&gt;4)-beta-D-Glc-(1&lt;-&gt;1)-Cer(d18:1(4E)) + UDP-alpha-D-galactose = a beta-D-Gal-(1-&gt;3)-beta-D-GlcNAc-(1-&gt;3)-beta-D-Gal-(1-&gt;4)-beta-D-Glc-(1&lt;-&gt;1')-Cer(d18:1(4E)) + UDP + H(+). The catalysed reaction is a neolactoside IV(3)-beta-GlcNAc-nLc4Cer(d18:1(4E)) + UDP-alpha-D-galactose = a neolactoside IV(3)-beta-[Gal-beta-(1-&gt;3)-GlcNAc]-nLc4Cer(d18:1(4E)) + UDP + H(+). The protein operates within protein modification; protein glycosylation. Beta-1,3-galactosyltransferase that transfers galactose from UDP-galactose to substrates with a terminal beta-N-acetylglucosamine (beta-GlcNAc) residue. Can also utilize substrates with a terminal galactose residue, albeit with lower efficiency. Involved in the biosynthesis of the carbohydrate moieties of glycolipids and glycoproteins. In Mus musculus (Mouse), this protein is Beta-1,3-galactosyltransferase 2.